We begin with the raw amino-acid sequence, 511 residues long: 2,3-bisphosphoglycerate-independent phosphoglycerate mutase (511 aa).

Asp-12 is a binding site for Mn(2+). Phosphotyrosine is present on Tyr-36. Residue Ser-62 participates in Mn(2+) binding. Ser-62 acts as the Phosphoserine intermediate in catalysis. Substrate is bound by residues His-123, 153 to 154 (RD), Arg-185, Arg-191, 261 to 264 (RPDR), and Lys-336. Residues Asp-403, His-407, Asp-444, His-445, and His-462 each coordinate Mn(2+).

The protein belongs to the BPG-independent phosphoglycerate mutase family. In terms of assembly, monomer. The cofactor is Mn(2+).

It catalyses the reaction (2R)-2-phosphoglycerate = (2R)-3-phosphoglycerate. It functions in the pathway carbohydrate degradation; glycolysis; pyruvate from D-glyceraldehyde 3-phosphate: step 3/5. Functionally, catalyzes the interconversion of 2-phosphoglycerate and 3-phosphoglycerate. In Geobacillus thermodenitrificans (strain NG80-2), this protein is 2,3-bisphosphoglycerate-independent phosphoglycerate mutase.